Reading from the N-terminus, the 431-residue chain is MILIDDIKYACMECVRGHRSSSCKHHERPLLQVRSKGRPGVYANGNPNHRVAIFAEEIAKSDKPSTNGTKRCKSEPIIVLKASSKQVIDCSSGVIIGPYDETKTKPSTVEKRTPSPPIISDESFINTSACCTPKISKGKSCGCCNNKRKAVNKSKILQNYIKNKLNQKINNNETLVFMNKSHTTNNEQKEDHQLYGMVPVPSCSIPGTCCCDDACSCQGCVVHGNSKYQIPLPTSKQQVTDTTNPFENEEKFIFNSMPQTDKSDLFFNTISTSSNVPPADSSSECSCPPNACDCTNCETHGILNGFRLDDYFKDQSKLMNVLDFNFSELLGTIPEQPIPTEFMQPPSENTLLTSLSSENSFIPNQTKELSTQPPILPLDAQNVCNELDQLEPLVPSLQPCDKKATKWVNNRDTLEDVSDNRVKSCCSKKTK.

Residues 1 to 40 (MILIDDIKYACMECVRGHRSSSCKHHERPLLQVRSKGRPG) constitute a DNA-binding region (copper-fist). 4 residues coordinate Zn(2+): Cys-11, Cys-14, Cys-23, and His-25.

The protein resides in the nucleus. In terms of biological role, copper ion-sensing transcription factor which activates transcription of the CTR1 copper transporter under low-copper conditions. Promotes filamentous and invasive growth. This chain is Metal-binding activator 1 (MAC1), found in Candida albicans (strain SC5314 / ATCC MYA-2876) (Yeast).